A 283-amino-acid polypeptide reads, in one-letter code: uncharacterized protein (283 aa).

The N-myristoyl glycine; by host moiety is linked to residue G2. 6 N-linked (GlcNAc...) asparagine; by host glycosylation sites follow: N31, N95, N105, N108, N137, and N147. 2 consecutive transmembrane segments (helical) span residues 181–201 (IIAA…VVYF) and 250–270 (FIVL…LDIP). Residue N277 is glycosylated (N-linked (GlcNAc...) asparagine; by host).

Its subcellular location is the membrane. This is an uncharacterized protein from Acanthamoeba polyphaga (Amoeba).